A 397-amino-acid polypeptide reads, in one-letter code: Lysophospholipid transporter LplT (397 aa).

Residues 1 to 17 (MSESVHTNTSLWSKGMK) are Periplasmic-facing. The chain crosses the membrane as a helical span at residues 18–38 (AVIVAQFLSAFGDNALLFATL). Topologically, residues 39-52 (ALLKAQFYPEWSQP) are cytoplasmic. The chain crosses the membrane as a helical span at residues 53 to 73 (ILQMVFVGAYILFAPFVGQVA). Topologically, residues 74-90 (DSFAKGRVMMFANGLKL) are periplasmic. The chain crosses the membrane as a helical span at residues 91–111 (LGAASICFGINPFLGYTLVGV). The Cytoplasmic portion of the chain corresponds to 112–144 (GAAAYSPAKYGILGELTTGSKLVKANGLMEAST). The helical transmembrane segment at 145-165 (IAAILLGSVAGGVLADWHVLV) threads the bilayer. A166 is a topological domain (periplasmic). Residues 167–187 (LAACALAYGGAVVANIYIPKL) traverse the membrane as a helical segment. Over 188–226 (AAARPGQSWNLINMTRSFLNACTSLWRNGETRFSLVGTS) the chain is Cytoplasmic. A helical membrane pass occupies residues 227–247 (LFWGAGVTLRFLLVLWVPVAL). The Periplasmic portion of the chain corresponds to 248–256 (GITDNATPT). A helical transmembrane segment spans residues 257–277 (YLNAMVAIGIVVGAGAAAKLV). At 278-280 (TLE) the chain is on the cytoplasmic side. A helical transmembrane segment spans residues 281 to 301 (TMSRCMPAGILIGVVVLIFSL). Residues 302–304 (QHE) are Periplasmic-facing. The chain crosses the membrane as a helical span at residues 305-325 (LLPAYALLMLIGVMGGFFVVP). At 326–343 (LNALLQERGKKSVGAGNA) the chain is on the cytoplasmic side. Residues 344–364 (IAVQNLGENSAMLLMLGIYSL) form a helical membrane-spanning segment. Residues 365 to 366 (AV) are Periplasmic-facing. Residues 367 to 387 (MVGIPVVPIGIGFGALFALAI) traverse the membrane as a helical segment. Over 388–397 (TALWIWQRRH) the chain is Cytoplasmic.

It belongs to the major facilitator superfamily. LplT (TC 2.A.1.42) family.

It localises to the cell inner membrane. Functionally, catalyzes the facilitated diffusion of 2-acyl-glycero-3-phosphoethanolamine (2-acyl-GPE) into the cell. The chain is Lysophospholipid transporter LplT from Shigella sonnei (strain Ss046).